A 353-amino-acid polypeptide reads, in one-letter code: Photosystem II protein D1 (353 aa).

T2 carries the post-translational modification N-acetylthreonine. T2 is subject to Phosphothreonine. 3 consecutive transmembrane segments (helical) span residues 29 to 46 (YIGW…TATS), 118 to 133 (HFLL…EWEL), and 142 to 156 (WIAV…AATA). Residue H118 participates in chlorophyll a binding. Residue Y126 participates in pheophytin a binding. [CaMn4O5] cluster is bound by residues D170 and E189. Residues 197-218 (FHMLGVAGVFGGSLFSAMHGSL) traverse the membrane as a helical segment. A chlorophyll a-binding site is contributed by H198. A quinone is bound by residues H215 and 264 to 265 (SF). H215 contributes to the Fe cation binding site. Residue H272 participates in Fe cation binding. The helical transmembrane segment at 274–288 (FLAAWPVVGIWFTAL) threads the bilayer. H332, E333, D342, and A344 together coordinate [CaMn4O5] cluster. Residues 345-353 (AIDAPSING) constitute a propeptide that is removed on maturation.

This sequence belongs to the reaction center PufL/M/PsbA/D family. As to quaternary structure, PSII is composed of 1 copy each of membrane proteins PsbA, PsbB, PsbC, PsbD, PsbE, PsbF, PsbH, PsbI, PsbJ, PsbK, PsbL, PsbM, PsbT, PsbX, PsbY, PsbZ, Psb30/Ycf12, at least 3 peripheral proteins of the oxygen-evolving complex and a large number of cofactors. It forms dimeric complexes. The D1/D2 heterodimer binds P680, chlorophylls that are the primary electron donor of PSII, and subsequent electron acceptors. It shares a non-heme iron and each subunit binds pheophytin, quinone, additional chlorophylls, carotenoids and lipids. D1 provides most of the ligands for the Mn4-Ca-O5 cluster of the oxygen-evolving complex (OEC). There is also a Cl(-1) ion associated with D1 and D2, which is required for oxygen evolution. The PSII complex binds additional chlorophylls, carotenoids and specific lipids. serves as cofactor. Post-translationally, tyr-161 forms a radical intermediate that is referred to as redox-active TyrZ, YZ or Y-Z. C-terminally processed by CTPA; processing is essential to allow assembly of the oxygen-evolving complex and thus photosynthetic growth.

Its subcellular location is the plastid. The protein resides in the chloroplast thylakoid membrane. The catalysed reaction is 2 a plastoquinone + 4 hnu + 2 H2O = 2 a plastoquinol + O2. In terms of biological role, photosystem II (PSII) is a light-driven water:plastoquinone oxidoreductase that uses light energy to abstract electrons from H(2)O, generating O(2) and a proton gradient subsequently used for ATP formation. It consists of a core antenna complex that captures photons, and an electron transfer chain that converts photonic excitation into a charge separation. The D1/D2 (PsbA/PsbD) reaction center heterodimer binds P680, the primary electron donor of PSII as well as several subsequent electron acceptors. The polypeptide is Photosystem II protein D1 (Glycine max (Soybean)).